The sequence spans 4660 residues: Low-density lipoprotein receptor-related protein 2 (4660 aa).

Residues Met1 to Ser25 form the signal peptide. Over Gln26–Thr4425 the chain is Extracellular. LDL-receptor class A domains follow at residues Glu27–Pro63, Ser66–Ala104, Thr107–His143, Asn141–Thr180, Leu182–Asn218, and Thr221–Glu257. 18 disulfides stabilise this stretch: Cys28–Cys40, Cys35–Cys53, Cys47–Cys62, Cys67–Cys80, Cys74–Cys93, Cys87–Cys103, Cys108–Cys120, Cys115–Cys133, Cys127–Cys142, Cys142–Cys157, Cys152–Cys170, Cys164–Cys179, Cys183–Cys195, Cys190–Cys208, Cys202–Cys217, Cys222–Cys234, Cys229–Cys247, and Cys241–Cys256. 2 N-linked (GlcNAc...) asparagine glycosylation sites follow: Asn159 and Asn178. N-linked (GlcNAc...) asparagine glycosylation is present at Asn259. Residues Arg264–Gly307 form the LDL-receptor class A 7 domain. Intrachain disulfides connect Cys265–Cys278, Cys272–Cys291, and Cys285–Cys306. Asn299 and Asn340 each carry an N-linked (GlcNAc...) asparagine glycan. Positions Asp347 to Gln382 constitute an EGF-like 1; calcium-binding domain. 2 cysteine pairs are disulfide-bonded: Cys351–Cys361 and Cys357–Cys370. LDL-receptor class B repeat units lie at residues His435–Asn477, Asn478–Val520, Gly521–Ser567, and Lys568–His612. The N-linked (GlcNAc...) asparagine glycan is linked to Asn462. Asn657 is a glycosylation site (N-linked (GlcNAc...) asparagine). 4 LDL-receptor class B repeats span residues Ser752–Ser794, Arg795–Ala836, Gly837–Ala880, and Ser881–Asn924. N-linked (GlcNAc...) asparagine glycosylation is present at Asn865. The region spanning Gln1024 to Gly1060 is the LDL-receptor class A 8 domain. 3 disulfides stabilise this stretch: Cys1025-Cys1037, Cys1032-Cys1050, and Cys1044-Cys1059. Asn1063 is a glycosylation site (N-linked (GlcNAc...) asparagine). LDL-receptor class A domains follow at residues Thr1065–Pro1102, Thr1109–Gln1145, Thr1149–Val1185, Asn1187–Pro1224, Met1230–Val1268, Thr1271–Pro1307, and His1312–Asn1350. Cystine bridges form between Cys1066–Cys1079, Cys1073–Cys1092, Cys1086–Cys1101, Cys1110–Cys1122, Cys1117–Cys1135, Cys1129–Cys1144, Cys1150–Cys1162, Cys1157–Cys1175, and Cys1169–Cys1184. Ca(2+) contacts are provided by Trp1127, Asp1130, Asp1132, Asp1134, Asp1140, and Glu1141. A glycan (N-linked (GlcNAc...) asparagine) is linked at Asn1187. 18 disulfide bridges follow: Cys1188–Cys1201, Cys1195–Cys1214, Cys1208–Cys1223, Cys1231–Cys1244, Cys1238–Cys1257, Cys1251–Cys1267, Cys1272–Cys1284, Cys1279–Cys1297, Cys1291–Cys1306, Cys1313–Cys1326, Cys1320–Cys1339, Cys1333–Cys1349, Cys1354–Cys1365, Cys1361–Cys1374, Cys1376–Cys1389, Cys1395–Cys1405, Cys1401–Cys1414, and Cys1416–Cys1429. Tyr1206, Asp1209, Val1211, Asp1213, Asp1219, and Glu1220 together coordinate Ca(2+). Asn1328 and Asn1341 each carry an N-linked (GlcNAc...) asparagine glycan. Residues Asn1350 to Glu1390 form the EGF-like 2 domain. Asn1384 carries N-linked (GlcNAc...) asparagine glycosylation. An EGF-like 3; calcium-binding domain is found at Asp1391–Lys1430. 3 N-linked (GlcNAc...) asparagine glycosylation sites follow: Asn1451, Asn1497, and Asn1551. 5 LDL-receptor class B repeats span residues Gly1479–Gly1521, Arg1522–Met1564, Asn1567–Asn1610, Arg1611–Phe1655, and Val1656–Ser1696. N-linked (GlcNAc...) asparagine glycosylation is found at Asn1676, Asn1733, and Asn1811. LDL-receptor class B repeat units lie at residues Gln1791–Ser1833, Arg1834–Arg1883, Gly1884–Glu1931, Gln1932–Phe1973, Leu1974–Arg2014, Gly2108–Ala2157, Gly2158–His2202, Arg2203–Thr2246, and Gly2247–Ser2290. N-linked (GlcNAc...) asparagine glycans are attached at residues Asn2134, Asn2178, and Asn2225. N-linked (GlcNAc...) asparagine glycosylation is present at Asn2396. LDL-receptor class B repeat units follow at residues Asn2432–Asn2478, Arg2479–Arg2519, Gly2520–Thr2563, Asp2564–Tyr2605, and Ile2606–Thr2647. Asn2488 and Asn2548 each carry an N-linked (GlcNAc...) asparagine glycan. LDL-receptor class A domains lie at Arg2700–Ala2738, Thr2741–Leu2777, Asn2780–Pro2819, Thr2822–Ala2861, Thr2864–Gly2902, Thr2907–Glu2946, Asn2949–Thr2991, Thr2994–Ser3030, Pro3033–His3071, and Thr3076–Gly3112. 18 cysteine pairs are disulfide-bonded: Cys2701-Cys2713, Cys2708-Cys2726, Cys2720-Cys2737, Cys2742-Cys2754, Cys2749-Cys2767, Cys2761-Cys2776, Cys2781-Cys2794, Cys2789-Cys2807, Cys2801-Cys2818, Cys2823-Cys2836, Cys2830-Cys2849, Cys2843-Cys2860, Cys2865-Cys2878, Cys2872-Cys2891, Cys2885-Cys2901, Cys2908-Cys2920, Cys2915-Cys2933, and Cys2927-Cys2945. A glycan (N-linked (GlcNAc...) asparagine) is linked at Asn2782. Residue Asn2810 is glycosylated (N-linked (GlcNAc...) asparagine). N-linked (GlcNAc...) asparagine glycosylation is present at Asn2949. Disulfide bonds link Cys2950–Cys2967, Cys2957–Cys2980, Cys2974–Cys2990, Cys2995–Cys3007, Cys3002–Cys3020, Cys3014–Cys3029, Cys3034–Cys3046, Cys3041–Cys3059, Cys3053–Cys3070, Cys3077–Cys3089, Cys3084–Cys3102, Cys3096–Cys3111, Cys3116–Cys3128, Cys3124–Cys3137, Cys3139–Cys3152, Cys3158–Cys3169, Cys3165–Cys3178, and Cys3180–Cys3193. N-linked (GlcNAc...) asparagine glycosylation occurs at Asn2989. Residues Gly3112 to Val3153 enclose the EGF-like 4 domain. N-linked (GlcNAc...) asparagine glycosylation occurs at Asn3127. The EGF-like 5; calcium-binding domain maps to Asp3154 to Arg3194. Asn3213, Asn3259, Asn3317, and Asn3357 each carry an N-linked (GlcNAc...) asparagine glycan. LDL-receptor class B repeat units lie at residues Lys3241–Ser3283, Arg3284–Arg3326, Gly3335–Asn3378, Asp3379–Thr3421, and Val3422–Tyr3462. Asn3448 carries N-linked (GlcNAc...) asparagine glycosylation. 8 consecutive LDL-receptor class A domains span residues Met3513–Pro3551, Phe3554–Glu3592, Arg3595–Ala3633, Thr3636–Thr3674, Asn3679–Glu3717, Pro3720–Val3757, Glu3760–Glu3796, and Thr3799–Pro3835. 24 cysteine pairs are disulfide-bonded: Cys3514–Cys3527, Cys3521–Cys3540, Cys3534–Cys3550, Cys3555–Cys3567, Cys3562–Cys3580, Cys3574–Cys3591, Cys3596–Cys3608, Cys3603–Cys3621, Cys3615–Cys3632, Cys3637–Cys3649, Cys3644–Cys3662, Cys3656–Cys3673, Cys3680–Cys3694, Cys3688–Cys3707, Cys3701–Cys3716, Cys3721–Cys3734, Cys3729–Cys3747, Cys3741–Cys3756, Cys3761–Cys3773, Cys3768–Cys3786, Cys3780–Cys3795, Cys3800–Cys3812, Cys3807–Cys3825, and Cys3819–Cys3834. The N-linked (GlcNAc...) asparagine glycan is linked to Asn3566. Asn3682 carries an N-linked (GlcNAc...) asparagine glycan. Asn3840 carries an N-linked (GlcNAc...) asparagine glycan. 3 LDL-receptor class A domains span residues Tyr3843–Phe3881, Pro3884–Arg3923, and Pro3929–Asn3965. Cystine bridges form between Cys3844–Cys3856, Cys3851–Cys3869, Cys3863–Cys3880, Cys3885–Cys3898, Cys3893–Cys3911, Cys3905–Cys3922, Cys3930–Cys3942, Cys3937–Cys3955, and Cys3949–Cys3964. One can recognise an EGF-like 6 domain in the interval Asp3968–Asp4003. Residues Asn3969 and Asn3980 are each glycosylated (N-linked (GlcNAc...) asparagine). 5 disulfides stabilise this stretch: Cys3972–Cys3981, Cys3977–Cys3991, Cys4013–Cys4023, Cys4019–Cys4032, and Cys4034–Cys4049. The EGF-like 7; calcium-binding domain maps to Asp4009 to Ala4050. Asn4070 carries an N-linked (GlcNAc...) asparagine glycan. LDL-receptor class B repeat units follow at residues Arg4156 to Leu4198, Gly4199 to Asn4242, and Asp4244 to Lys4285. The N-linked (GlcNAc...) asparagine glycan is linked to Asn4329. The 35-residue stretch at Met4379–Glu4413 folds into the EGF-like 8 domain. Intrachain disulfides connect Cys4383–Cys4391, Cys4385–Cys4401, and Cys4403–Cys4412. The helical transmembrane segment at Met4426–Leu4446 threads the bilayer. The Cytoplasmic portion of the chain corresponds to Phe4447–Val4660. Positions Ser4454 to Pro4463 match the SH3-binding motif. Residues Pro4457 to Leu4462 carry the PxLPxI/L motif 1; mediates interaction with ANKRA2 motif. The PxLPxI/L motif 2; mediates interaction with ANKRA2 motif lies at Pro4460–Leu4465. Residues Ser4464 and Ser4467 each carry the phosphoserine modification. Positions Phe4522–Tyr4527 match the Endocytosis signal motif. The interval Asn4559–Glu4582 is disordered. Ser4577 bears the Phosphoserine mark. The segment at Gln4597 to Asp4610 is interaction with DAB2. An NPXY motif motif is present at residues Asn4603–Tyr4606. Residues Tyr4606 to Met4609 carry the SH2-binding motif. The interval Val4617 to Val4660 is disordered. Residues Val4619–Lys4630 carry the SH3-binding motif. Ser4624 carries the post-translational modification Phosphoserine. A compositionally biased stretch (polar residues) spans Arg4634–Glu4644. Phosphothreonine is present on Thr4637. Phosphoserine is present on Ser4658.

It belongs to the LDLR family. Binds plasminogen, extracellular matrix components, plasminogen activator-plasminogen activator inhibitor type I complex, apolipoprotein E-enriched beta-VLDL, lipoprotein lipase, lactoferrin, CLU/clusterin and calcium. Forms a multimeric complex together with LRPAP1. Interacts (via PxLPxI/L motif) with ANKRA2 (via ankyrin repeats). Interacts with LRP2BP. Interacts (via NPXY motif) with DAB2; the interaction is not affected by tyrosine phosphorylation of the NPXY motif. Interacts with MB. Interacts with BMP4. Interacts with the Sonic hedgehog protein N-product which is the active product of SHH. Interacts with CST3 in a calcium-dependent manner. Interacts with the vitamin-D binding protein GC/DBP. Interacts with sex hormone-binding protein SHBG. Interacts with angiotensin-2. Also interacts with angiotensin 1-7. Interacts with APOM. Interacts with selenoprotein SEPP1. Interacts with LEP. Interacts with ALB. Interacts with the antiapoptotic protein BIRC5/survivin. Interacts with matrix metalloproteinase MMP2 in complex with metalloproteinase inhibitor TIMP1. In neurons, forms a trimeric complex with APP and APPB1/FE65. Interacts with LDLRAP1/ARH; mediates trafficking of LRP2 to the endocytic recycling compartment. Does not interact with beta-amyloid protein 40 alone but interacts with the complex composed of beta-amyloid protein 40 and CLU/APOJ. Interacts with MDK. A fraction undergoes proteolytic cleavage of the extracellular domain at the cell membrane to generate a cytoplasmic tail fragment. This is internalized into the early endosome from where it trafficks in an LDLRAP1/ARH-dependent manner to the endocytic recycling compartment (ERC). In the ERC, it is further cleaved by gamma-secretase to release a fragment which translocates to the nucleus and mediates transcriptional repression. Post-translationally, N-glycosylation is required for ligand binding. As to expression, in the inner ear, expressed in the lumen of the endolymphatic sac where it localizes to macrophage-like cells as well as to mitochondria-rich and ribosome-rich epithelial cells (at protein level). In the inner ear, expressed in marginal cells of the stria vascularis, epithelial cells at the spiral prominence, epithelial cells of Reissner's membrane facing the cochlear duct, and Kolliker's organ (at protein level). Expressed in the choroid plexus epithelium in the brain (at protein level). In the brain, also expressed in astrocytes (at protein level). Expression also detected in epithelial cells of the kidney glomerulus and proximal tubule, lung, epididymis and yolk sac.

The protein localises to the apical cell membrane. The protein resides in the endosome lumen. Its subcellular location is the membrane. It is found in the clathrin-coated pit. It localises to the cell projection. The protein localises to the dendrite. The protein resides in the axon. In terms of biological role, multiligand endocytic receptor. Acts together with CUBN to mediate endocytosis of high-density lipoproteins. Mediates receptor-mediated uptake of polybasic drugs such as aprotinin, aminoglycosides and polymyxin B. In the kidney, mediates the tubular uptake and clearance of leptin. Also mediates transport of leptin across the blood-brain barrier through endocytosis at the choroid plexus epithelium. Endocytosis of leptin in neuronal cells is required for hypothalamic leptin signaling and leptin-mediated regulation of feeding and body weight. Mediates endocytosis and subsequent lysosomal degradation of CST3 in kidney proximal tubule cells. Mediates renal uptake of 25-hydroxyvitamin D3 in complex with the vitamin D3 transporter GC/DBP. Mediates renal uptake of metallothionein-bound heavy metals. Together with CUBN, mediates renal reabsorption of myoglobin. Mediates renal uptake and subsequent lysosomal degradation of APOM. Plays a role in kidney selenium homeostasis by mediating renal endocytosis of selenoprotein SEPP1. Mediates renal uptake of the antiapoptotic protein BIRC5/survivin which may be important for functional integrity of the kidney. Mediates renal uptake of matrix metalloproteinase MMP2 in complex with metalloproteinase inhibitor TIMP1. Mediates endocytosis of Sonic hedgehog protein N-product (ShhN), the active product of SHH. Also mediates ShhN transcytosis. In the embryonic neuroepithelium, mediates endocytic uptake and degradation of BMP4, is required for correct SHH localization in the ventral neural tube and plays a role in patterning of the ventral telencephalon. Required at the onset of neurulation to sequester SHH on the apical surface of neuroepithelial cells of the rostral diencephalon ventral midline and to control PTCH1-dependent uptake and intracellular trafficking of SHH. During neurulation, required in neuroepithelial cells for uptake of folate bound to the folate receptor FOLR1 which is necessary for neural tube closure. In the adult brain, negatively regulates BMP signaling in the subependymal zone which enables neurogenesis to proceed. In astrocytes, mediates endocytosis of ALB which is required for the synthesis of the neurotrophic factor oleic acid. Involved in neurite branching. During optic nerve development, required for SHH-mediated migration and proliferation of oligodendrocyte precursor cells. Mediates endocytic uptake and clearance of SHH in the retinal margin which protects retinal progenitor cells from mitogenic stimuli and keeps them quiescent. Plays a role in reproductive organ development by mediating uptake in reproductive tissues of androgen and estrogen bound to the sex hormone binding protein SHBG. Mediates endocytosis of angiotensin-2. Also mediates endocytosis of angiotensin 1-7. Binds to the complex composed of beta-amyloid protein 40 and CLU/APOJ and mediates its endocytosis and lysosomal degradation. Required for embryonic heart development. Required for normal hearing, possibly through interaction with estrogen in the inner ear. In Rattus norvegicus (Rat), this protein is Low-density lipoprotein receptor-related protein 2 (Lrp2).